The chain runs to 159 residues: Regulatory protein RecX (159 aa).

It belongs to the RecX family.

The protein localises to the cytoplasm. Functionally, modulates RecA activity. The polypeptide is Regulatory protein RecX (Chlorobium limicola (strain DSM 245 / NBRC 103803 / 6330)).